The following is a 177-amino-acid chain: Ferritin light chain, oocyte isoform (177 aa).

The region spanning 9-158 (QNYHEESEAG…DHLTNLRRVK (150 aa)) is the Ferritin-like diiron domain. Glutamate 26, histidine 64, and glutamate 106 together coordinate Fe cation.

The protein belongs to the ferritin family. Oligomer of 24 subunits. There are two types of subunits: L (light) chain and H (heavy) chain. The functional molecule is roughly spherical and contains a central cavity into which the insoluble mineral iron core is deposited.

Its function is as follows. Stores iron in a soluble, non-toxic, readily available form. Important for iron homeostasis. Iron is taken up in the ferrous form and deposited as ferric hydroxides after oxidation. This Xenopus laevis (African clawed frog) protein is Ferritin light chain, oocyte isoform.